The sequence spans 164 residues: UPF0262 protein Xaut_1232 (164 aa).

This sequence belongs to the UPF0262 family.

This is UPF0262 protein Xaut_1232 from Xanthobacter autotrophicus (strain ATCC BAA-1158 / Py2).